We begin with the raw amino-acid sequence, 156 residues long: Ribonuclease H (156 aa).

The 143-residue stretch at T2–S144 folds into the RNase H type-1 domain. 4 residues coordinate Mg(2+): D11, E49, D71, and D136.

The protein belongs to the RNase H family. In terms of assembly, monomer. The cofactor is Mg(2+).

The protein localises to the cytoplasm. The catalysed reaction is Endonucleolytic cleavage to 5'-phosphomonoester.. Endonuclease that specifically degrades the RNA of RNA-DNA hybrids. This chain is Ribonuclease H, found in Nitratidesulfovibrio vulgaris (strain DSM 19637 / Miyazaki F) (Desulfovibrio vulgaris).